The chain runs to 554 residues: Rab GTPase-binding effector protein 2 (554 aa).

Residues 1–15 (MAAAPAALALDPQPQ) show a composition bias toward low complexity. 3 disordered regions span residues 1–29 (MAAA…ELSR), 167–250 (IQRR…ETAS), and 375–395 (EQLP…DEAL). Residues 15–173 (QEEQKDASES…IQEIQRRPRQ (159 aa)) are a coiled coil. Positions 16-29 (EEQKDASESSELSR) are enriched in basic and acidic residues. 4 positions are modified to phosphoserine: Ser176, Ser180, Ser187, and Ser191. A coiled-coil region spans residues 274–512 (DSQWEQLQVE…LETSEQVQRD (239 aa)). A compositionally biased stretch (polar residues) spans 377–386 (LPSSALQGSE).

It belongs to the rabaptin family. Heterodimer with RABGEF1. The dimer binds RAB5A that has been activated by GTP-binding. Interacts with SDCCAG8; this interaction is important for ciliogenesis regulation. Interacts with RAB4A; this interaction may mediate VEGFR2 cell surface expression.

It localises to the cytoplasm. Its subcellular location is the early endosome. The protein resides in the cytoskeleton. It is found in the microtubule organizing center. The protein localises to the centrosome. It localises to the cilium basal body. Functionally, plays a role in membrane trafficking and in homotypic early endosome fusion. Participates in arteriogenesis by regulating vascular endothelial growth factor receptor 2/VEGFR2 cell surface expression and endosomal trafficking. By interacting with SDCCAG8, localizes to centrosomes and plays a critical role in ciliogenesis. In Rattus norvegicus (Rat), this protein is Rab GTPase-binding effector protein 2 (Rabep2).